We begin with the raw amino-acid sequence, 267 residues long: MGVTFDKCETRPANIDAILNGLDRYNPETTTVFQDYVAQQCEDRTFDCYANLALLKLYQFNPHLLQAETVTNVLVKALTVFPSPAFSLCLALLPAHTQPFQASDAEAQAAAQTSDFVESIQKLARLSTLLESAQYTQFWSTLNSDDLYADLVADVAGFEELVRIRIAVEVGKTFREIPAEVLEQWLDLRSREALEKFVAEVCSWEVDKSGANTVIKVPTNKENEARSEVKSERVGVDMFGRVIRRGSSRLHERIDKRYPHRTQPFSF.

Residues 46–233 form the PCI domain; it reads FDCYANLALL…EARSEVKSER (188 aa).

The protein belongs to the eIF-3 subunit K family. In terms of assembly, component of the eukaryotic translation initiation factor 3 (eIF-3) complex.

Its subcellular location is the cytoplasm. Component of the eukaryotic translation initiation factor 3 (eIF-3) complex, which is involved in protein synthesis of a specialized repertoire of mRNAs and, together with other initiation factors, stimulates binding of mRNA and methionyl-tRNAi to the 40S ribosome. The eIF-3 complex specifically targets and initiates translation of a subset of mRNAs involved in cell proliferation. The polypeptide is Eukaryotic translation initiation factor 3 subunit K (Aspergillus niger (strain ATCC MYA-4892 / CBS 513.88 / FGSC A1513)).